The primary structure comprises 119 residues: Large ribosomal subunit protein bL20 (119 aa).

Belongs to the bacterial ribosomal protein bL20 family.

Binds directly to 23S ribosomal RNA and is necessary for the in vitro assembly process of the 50S ribosomal subunit. It is not involved in the protein synthesizing functions of that subunit. The sequence is that of Large ribosomal subunit protein bL20 from Azorhizobium caulinodans (strain ATCC 43989 / DSM 5975 / JCM 20966 / LMG 6465 / NBRC 14845 / NCIMB 13405 / ORS 571).